The following is an 88-amino-acid chain: Putative membrane protein insertion efficiency factor (88 aa).

The segment at 65–88 (LDFVPPKKDKNDDSGHTCKAHHHH) is disordered. Over residues 69 to 80 (PPKKDKNDDSGH) the composition is skewed to basic and acidic residues.

It belongs to the UPF0161 family.

The protein resides in the cell membrane. In terms of biological role, could be involved in insertion of integral membrane proteins into the membrane. The chain is Putative membrane protein insertion efficiency factor from Listeria innocua serovar 6a (strain ATCC BAA-680 / CLIP 11262).